Consider the following 640-residue polypeptide: Probable potassium transport system protein Kup 2 (640 aa).

12 helical membrane passes run 19–39 (LFSS…YGDI), 67–87 (VLSL…VVFV), 118–138 (GVVA…GVIT), 155–175 (EAAK…LFLV), 181–201 (GVIG…IAAL), 230–250 (FVGV…EALY), 265–285 (WLGL…ALLL), 307–327 (MVCL…SGVF), 355–375 (VYIP…VLVF), 384–404 (AYGI…FFVI), 415–435 (AVPL…ANLF), and 437–457 (IFDG…SMIT).

The protein belongs to the HAK/KUP transporter (TC 2.A.72) family.

The protein resides in the cell inner membrane. The catalysed reaction is K(+)(in) + H(+)(in) = K(+)(out) + H(+)(out). Its function is as follows. Transport of potassium into the cell. Likely operates as a K(+):H(+) symporter. The polypeptide is Probable potassium transport system protein Kup 2 (Syntrophobacter fumaroxidans (strain DSM 10017 / MPOB)).